A 201-amino-acid polypeptide reads, in one-letter code: MIVQIGRREEFDKKLLGEMHKLRAQVFKERKGWDVSVIDEMEIDGYDALSPYYMLIQEDTPEAQVFGCWRILDTTGPYMLKNTFPELLHGKEAPCSPHIWELSRFAINSGQKGSLGFSDCTLEAMRALARYSLQNDIQTLVTVTTVGVEKMMIRAGLDVSRFGPHLKIGIERAVALRIELNAKTQIALYGGVLVEQRLAVS.

Belongs to the autoinducer synthase family.

It carries out the reaction a fatty acyl-[ACP] + S-adenosyl-L-methionine = an N-acyl-L-homoserine lactone + S-methyl-5'-thioadenosine + holo-[ACP] + H(+). In terms of biological role, required for the synthesis of PAI consisting of 3-oxo-N-(tetrahydro-2-oxo-3-furanyl)-dodecanamide also known as N-(3-oxododecanoyl)homoserine lactone, an autoinducer molecule which binds to LasR and thus acts in elastase biosynthesis regulation. In Pseudomonas aeruginosa (strain ATCC 15692 / DSM 22644 / CIP 104116 / JCM 14847 / LMG 12228 / 1C / PRS 101 / PAO1), this protein is Acyl-homoserine-lactone synthase (lasI).